Reading from the N-terminus, the 156-residue chain is Small ribosomal subunit protein uS11 (156 aa).

Residues Met1–Lys27 are disordered.

Belongs to the universal ribosomal protein uS11 family. As to quaternary structure, part of the 30S ribosomal subunit.

Located on the platform of the 30S subunit. The protein is Small ribosomal subunit protein uS11 of Thermofilum pendens (strain DSM 2475 / Hrk 5).